The chain runs to 324 residues: Ribose 1,5-bisphosphate isomerase (324 aa).

Residues 22–25 (RGAG) and Arg-65 each bind substrate. Residue Cys-135 is the Proton acceptor of the active site. 137-139 (SKA) provides a ligand contact to substrate. The active-site Proton donor is Asp-204. Substrate contacts are provided by residues 214-215 (NK) and Lys-240.

It belongs to the eIF-2B alpha/beta/delta subunits family. R15P isomerase subfamily.

It catalyses the reaction alpha-D-ribose 1,5-bisphosphate = D-ribulose 1,5-bisphosphate. Its function is as follows. Catalyzes the isomerization of ribose 1,5-bisphosphate (R15P) to ribulose 1,5-bisphosphate (RuBP), the CO(2) acceptor and substrate for RubisCO. Functions in an archaeal AMP degradation pathway, together with AMP phosphorylase and RubisCO. The sequence is that of Ribose 1,5-bisphosphate isomerase from Pyrococcus horikoshii (strain ATCC 700860 / DSM 12428 / JCM 9974 / NBRC 100139 / OT-3).